A 373-amino-acid polypeptide reads, in one-letter code: MLFLGMLKQVVNGTAQSKASSCRKLVLPLKFLGTSQHRIPADANFHSTSISEAEPPRVLITGGLGQLGVGLANLLRKRFGKDNVILSDIRKPPAHVFHSGPFVYANILDYKSLREIVVNHRISWLFHYSALLSAVGEANVSLARDVNITGLHNVLDVAAEYNVRLFVPSTIGAFGPTSPRNPAPDLCIQRPRTIYGVSKVHTELMGEYYYYRYGLDFRCLRYPGIISADSQPGGGTTDYAVQIFHAAAKNGTFECNLEAGTRLPMMYISDCLRATLEVMEAPAERLSMRTYNISAMSFTPEELAQALRKHAPDFQITYCVDPLRQAIAESWPMILDDSNARKDWGWKHDFDLPELVATMLNFHGVSTRVAQVN.

NAD(+) is bound by residues glycine 62 to leucine 67, aspartate 88 to arginine 90, asparagine 106 to isoleucine 107, tyrosine 195, lysine 199, and isoleucine 225. The active-site Proton donor/acceptor is tyrosine 195.

The protein belongs to the NAD(P)-dependent epimerase/dehydratase family. Homodimer.

It is found in the mitochondrion. The enzyme catalyses L-threonine + NAD(+) = (2S)-2-amino-3-oxobutanoate + NADH + H(+). Its pathway is amino-acid degradation; L-threonine degradation via oxydo-reductase pathway; glycine from L-threonine: step 1/2. In terms of biological role, catalyzes the NAD(+)-dependent oxidation of L-threonine to 2-amino-3-ketobutyrate, mediating L-threonine catabolism. The polypeptide is L-threonine 3-dehydrogenase, mitochondrial (Mus musculus (Mouse)).